A 113-amino-acid chain; its full sequence is Small ribosomal subunit protein bS6 (113 aa).

The protein belongs to the bacterial ribosomal protein bS6 family.

In terms of biological role, binds together with bS18 to 16S ribosomal RNA. The chain is Small ribosomal subunit protein bS6 from Ruthia magnifica subsp. Calyptogena magnifica.